The chain runs to 366 residues: Probable neutral protease 2 homolog B (366 aa).

The signal sequence occupies residues 1–19; the sequence is MQVIVALAALSSLAAPALG. A propeptide spanning residues 20–189 is cleaved from the precursor; it reads FSIPRGVPVS…RGPRSRITKR (170 aa). Intrachain disulfides connect Cys-197–Cys-267, Cys-274–Cys-292, and Cys-306–Cys-366. His-317 contacts Zn(2+). Residue Glu-318 is part of the active site. His-321 and Asp-332 together coordinate Zn(2+).

This sequence belongs to the peptidase M35 family. Zn(2+) is required as a cofactor.

The protein resides in the secreted. It carries out the reaction Preferential cleavage of bonds with hydrophobic residues in P1'. Also 3-Asn-|-Gln-4 and 8-Gly-|-Ser-9 bonds in insulin B chain.. In terms of biological role, probable secreted metalloprotease that shows high activities on basic nuclear substrates such as histone and protamine. May be involved in virulence. The polypeptide is Probable neutral protease 2 homolog B (NpII-B) (Trichophyton rubrum (Athlete's foot fungus)).